The chain runs to 176 residues: Large ribosomal subunit protein uL6 (176 aa).

This sequence belongs to the universal ribosomal protein uL6 family. Part of the 50S ribosomal subunit.

Functionally, this protein binds to the 23S rRNA, and is important in its secondary structure. It is located near the subunit interface in the base of the L7/L12 stalk, and near the tRNA binding site of the peptidyltransferase center. This is Large ribosomal subunit protein uL6 from Burkholderia ambifaria (strain MC40-6).